Reading from the N-terminus, the 166-residue chain is Bacterial non-heme ferritin (166 aa).

Positions 2–145 (LSKELLAALN…THIDYLTRIG (144 aa)) constitute a Ferritin-like diiron domain. Fe cation-binding residues include Glu-17, Glu-50, His-53, Glu-94, and Gln-127.

This sequence belongs to the ferritin family. Prokaryotic subfamily.

Its subcellular location is the cytoplasm. The catalysed reaction is 4 Fe(2+) + O2 + 6 H2O = 4 iron(III) oxide-hydroxide + 12 H(+). Functionally, iron-storage protein. The protein is Bacterial non-heme ferritin (ftnA) of Staphylococcus epidermidis (strain ATCC 35984 / DSM 28319 / BCRC 17069 / CCUG 31568 / BM 3577 / RP62A).